Reading from the N-terminus, the 222-residue chain is MSAGDTLDKLVVFLAKRDGIDKLVKTFQYVSKLAHWAAESSSPGLAGRAKNWETSAGLSRKAFRTGRFLTGLNGLRRAPGEFGALAVLANAGEMVYFFFDHFTWLSRVGVLDAWLARRMSFISAFGESVGYVFFIAMDLIMIRRGLRQERKLLREGGKDKDKEVKKIRMDRVMRLMATAANVADLVIGIADIEPNPFCNHAVTLGISGLVSAWAGWYRNWPS.

At methionine 1–glutamate 81 the chain is on the cytoplasmic side. Residues phenylalanine 82–phenylalanine 102 traverse the membrane as a helical segment. The Lumenal portion of the chain corresponds to threonine 103–proline 196. Residues phenylalanine 197–tyrosine 217 traverse the membrane as a helical segment. Over arginine 218–serine 222 the chain is Cytoplasmic.

It belongs to the peroxin-11 family. As to expression, expressed in seedlings, shoots, leaf sheaths and flag leaf.

The protein localises to the peroxisome membrane. Its function is as follows. Involved in peroxisomal proliferation. This chain is Peroxisomal membrane protein 11-4 (PEX11-4), found in Oryza sativa subsp. indica (Rice).